A 451-amino-acid chain; its full sequence is UDP-glycosyltransferase 76E11 (451 aa).

UDP-alpha-D-glucose is bound by residues serine 273, alanine 332 to glutamine 334, histidine 349 to glutamate 357, and serine 371 to glutamine 374.

Belongs to the UDP-glycosyltransferase family.

Possesses low quercetin 3-O-glucosyltransferase and 7-O-glucosyltransferase activities in vitro. In Arabidopsis thaliana (Mouse-ear cress), this protein is UDP-glycosyltransferase 76E11 (UGT76E11).